A 264-amino-acid chain; its full sequence is Undecaprenyl-diphosphatase (264 aa).

Transmembrane regions (helical) follow at residues 1–21 (MTVF…FLPI), 40–60 (GLTF…AFFW), 81–101 (MFWY…LLEE), 109–129 (TPLL…WADA), 140–160 (ISMA…IPGV), 183–203 (FSFL…LKDI), 211–231 (AFIT…SFLL), and 239–259 (FALF…LAAA).

Belongs to the UppP family.

It is found in the cell membrane. It catalyses the reaction di-trans,octa-cis-undecaprenyl diphosphate + H2O = di-trans,octa-cis-undecaprenyl phosphate + phosphate + H(+). Functionally, catalyzes the dephosphorylation of undecaprenyl diphosphate (UPP). Confers resistance to bacitracin. The polypeptide is Undecaprenyl-diphosphatase (Pelotomaculum thermopropionicum (strain DSM 13744 / JCM 10971 / SI)).